We begin with the raw amino-acid sequence, 213 residues long: Uridine kinase (213 aa).

13-20 (GGSCSGKT) lines the ATP pocket.

The protein belongs to the uridine kinase family.

It localises to the cytoplasm. It carries out the reaction uridine + ATP = UMP + ADP + H(+). The catalysed reaction is cytidine + ATP = CMP + ADP + H(+). It functions in the pathway pyrimidine metabolism; CTP biosynthesis via salvage pathway; CTP from cytidine: step 1/3. The protein operates within pyrimidine metabolism; UMP biosynthesis via salvage pathway; UMP from uridine: step 1/1. The polypeptide is Uridine kinase (udk) (Mycoplasma pneumoniae (strain ATCC 29342 / M129 / Subtype 1) (Mycoplasmoides pneumoniae)).